Consider the following 405-residue polypeptide: Growth/differentiation factor 11 (405 aa).

Positions Met-1–Ala-24 are cleaved as a signal peptide. The propeptide occupies Ala-25–Arg-296. A glycan (N-linked (GlcNAc...) asparagine) is linked at Asn-92. 4 cysteine pairs are disulfide-bonded: Cys-302–Cys-312, Cys-311–Cys-370, Cys-339–Cys-402, and Cys-343–Cys-404.

The protein belongs to the TGF-beta family. As to quaternary structure, homodimer; disulfide-linked. Interacts directly with ACVR2B. Interacts directly with ACVR2A. Interacts with ACVR1B, TGFBR1 and ACVR1C in an ACVR2B-dependent manner. Interacts with FST isoform 2/FS288. Synthesized as large precursor molecule that undergoes proteolytic cleavage by furin-like proteases. This produces an inactive form consisting of the mature C-terminal portion non-covalently bound to its cleaved N-terminal propeptide. Activation of the mature form requires additional cleavage of the propeptide by a tolloid-like metalloproteinase.

It is found in the secreted. In terms of biological role, secreted signal that acts globally to regulate anterior/posterior axial patterning during development. May play critical roles in patterning both mesodermal and neural tissues. It is required for proper vertebral patterning and orofacial development. Signals through activin receptors type-2, ACVR2A and ACVR2B, and activin receptors type-1, ACVR1B, ACVR1C and TGFBR1 leading to the phosphorylation of SMAD2 and SMAD3. The chain is Growth/differentiation factor 11 (Gdf11) from Rattus norvegicus (Rat).